We begin with the raw amino-acid sequence, 279 residues long: 2-dehydro-3-deoxyphosphooctonate aldolase (279 aa).

It belongs to the KdsA family.

The protein resides in the cytoplasm. It carries out the reaction D-arabinose 5-phosphate + phosphoenolpyruvate + H2O = 3-deoxy-alpha-D-manno-2-octulosonate-8-phosphate + phosphate. The protein operates within carbohydrate biosynthesis; 3-deoxy-D-manno-octulosonate biosynthesis; 3-deoxy-D-manno-octulosonate from D-ribulose 5-phosphate: step 2/3. It participates in bacterial outer membrane biogenesis; lipopolysaccharide biosynthesis. This chain is 2-dehydro-3-deoxyphosphooctonate aldolase, found in Aromatoleum aromaticum (strain DSM 19018 / LMG 30748 / EbN1) (Azoarcus sp. (strain EbN1)).